The sequence spans 771 residues: Tubulin monoglycylase TTLL3 (771 aa).

The segment at 70 to 106 (PRPSFSQPRRHDHETETTDEGDSSDEDDLGEEVERDD) is disordered. A compositionally biased stretch (acidic residues) spans 86–106 (TTDEGDSSDEDDLGEEVERDD). One can recognise a TTL domain in the interval 220 to 566 (EGEKMGEVHN…RRSERNTDTG (347 aa)). Residues lysine 339, 345-346 (RG), 377-380 (QKYI), 390-392 (KFD), and 434-435 (CN) each bind ATP. Arginine 345 is a binding site for a protein. An L-glutamate-binding site is contributed by serine 437. Residues aspartate 512, glutamate 525, and asparagine 527 each coordinate Mg(2+). Glutamate 525 lines the ATP pocket. 2 disordered regions span residues 605 to 640 (LIQS…EEVK) and 682 to 713 (TELH…PTLY). Residues 614–633 (SKSTNHKSSLLSSPCTSGKE) are compositionally biased toward polar residues.

Mg(2+) is required as a cofactor.

Its subcellular location is the cytoplasm. It localises to the cytoskeleton. The protein localises to the cell projection. The protein resides in the cilium. It is found in the cilium axoneme. Its subcellular location is the flagellum axoneme. The catalysed reaction is L-glutamyl-[protein] + glycine + ATP = glycyl-L-glutamyl-[protein] + ADP + phosphate + H(+). Functionally, monoglycylase which modifies alpha- and beta-tubulin, adding a single glycine on the gamma-carboxyl groups of specific glutamate residues to generate monoglycine side chains within the C-terminal tail of tubulin. Not involved in elongation step of the polyglycylation reaction. Preferentially glycylates a beta-tail peptide over the alpha-tail, although shifts its preference toward alpha-tail as beta-tail glutamylation increases. Competes with polyglutamylases for modification site on beta-tubulin substrate, thereby creating an anticorrelation between glycylation and glutamylation reactions. Not involved in elongation step of the polyglycylation reaction. This Danio rerio (Zebrafish) protein is Tubulin monoglycylase TTLL3 (ttll3).